The primary structure comprises 457 residues: Multidrug resistance protein MdtK (457 aa).

12 consecutive transmembrane segments (helical) span residues 11 to 31, 53 to 73, 93 to 113, 127 to 147, 160 to 180, 189 to 209, 243 to 263, 276 to 296, 314 to 334, 350 to 370, 387 to 407, and 418 to 438; these read LLAL…MGFV, IWLP…PVIA, WLAG…GYII, AVGY…FQVA, GMVM…IFIY, GGVG…LAMV, LPIA…ALLV, IALN…AAVT, AART…IFTV, VVTL…SDSI, IFYI…YILA, and PAGF…MMML.

This sequence belongs to the multi antimicrobial extrusion (MATE) (TC 2.A.66.1) family. MdtK subfamily.

Its subcellular location is the cell inner membrane. In terms of biological role, multidrug efflux pump that functions probably as a Na(+)/drug antiporter. In Escherichia coli O9:H4 (strain HS), this protein is Multidrug resistance protein MdtK.